A 453-amino-acid polypeptide reads, in one-letter code: Succinate-semialdehyde dehydrogenase (acetylating) (453 aa).

An NADP(+)-binding site is contributed by 188–193 (ATGGAG). The active site involves Cys-242.

In terms of assembly, homodimer.

The catalysed reaction is succinate semialdehyde + NADP(+) + CoA = succinyl-CoA + NADPH + H(+). Catalyzes the reduction of succinate semialdehyde to succinyl-CoA. The enzyme is specific for succinate semialdehyde and succinyl-CoA, and only shows low activity with palmitoyl-CoA. There is no activity with NAD(+) as cosubstrate. The chain is Succinate-semialdehyde dehydrogenase (acetylating) (sucD) from Clostridium kluyveri (strain ATCC 8527 / DSM 555 / NBRC 12016 / NCIMB 10680 / K1).